Here is a 211-residue protein sequence, read N- to C-terminus: FMN-dependent NADH:quinone oxidoreductase 3 (211 aa).

102–105 (MWNF) contributes to the FMN binding site.

Belongs to the azoreductase type 1 family. Homodimer. FMN is required as a cofactor.

The catalysed reaction is 2 a quinone + NADH + H(+) = 2 a 1,4-benzosemiquinone + NAD(+). It catalyses the reaction N,N-dimethyl-1,4-phenylenediamine + anthranilate + 2 NAD(+) = 2-(4-dimethylaminophenyl)diazenylbenzoate + 2 NADH + 2 H(+). In terms of biological role, quinone reductase that provides resistance to thiol-specific stress caused by electrophilic quinones. Also exhibits azoreductase activity. Catalyzes the reductive cleavage of the azo bond in aromatic azo compounds to the corresponding amines. The sequence is that of FMN-dependent NADH:quinone oxidoreductase 3 from Bacillus cereus (strain ZK / E33L).